Reading from the N-terminus, the 368-residue chain is MSFHTEPPYTHGSLPKTAVLLVNLGTPDAPTTSAVRTYLNEFLSDPRVVEIPRVIWWFILKLIILPFRSGKSAKKYAAIWSNEGSPLRVHTEKQAKLLTGYLGARGHEVRVEYAMRYGSPSVPEVLRKLKADGCDRILVLPAYPQYSGTTTASIFDAVFKHYARERNVPELRFVKHYHDHESYIRALQKSVLAHWDMAGRPDKLVMSFHGVPKRTLTLGDPYFCECHKTARLLAKELDLTEDQYVVTFQSRFGKAEWLQPYTAPTLQKLAKSGVKRVDVLCPGFTSDCLETLEEIGIEVRRDFLQAGGQDFNYIACLNENDAWIKALAQIAELHMIGWPTILSPALLEERNEEARISLAEAQRLGAQQ.

Residues His-209 and Glu-290 each contribute to the Fe cation site.

Belongs to the ferrochelatase family.

The protein localises to the cytoplasm. It catalyses the reaction heme b + 2 H(+) = protoporphyrin IX + Fe(2+). Its pathway is porphyrin-containing compound metabolism; protoheme biosynthesis; protoheme from protoporphyrin-IX: step 1/1. In terms of biological role, catalyzes the ferrous insertion into protoporphyrin IX. This is Ferrochelatase from Herminiimonas arsenicoxydans.